Here is a 714-residue protein sequence, read N- to C-terminus: Fumarate reductase flavoprotein subunit (714 aa).

Residues 13-16, 42-44, and 49-50 contribute to the FAD site; these read GGLA, SHS, and GG. The residue at position 43 (H43) is a Tele-8alpha-FAD histidine. Active-site residues include H257 and R273. FAD-binding positions include E420 and 436 to 437; that span reads SV.

It belongs to the FAD-dependent oxidoreductase 2 family. FRD/SDH subfamily. In terms of assembly, part of an enzyme complex containing three subunits: a flavoprotein (frdA), an iron-sulfur protein (frdB), and diheme cytochrome b (frdC). It depends on FAD as a cofactor.

The protein localises to the cell inner membrane. The catalysed reaction is a quinone + succinate = fumarate + a quinol. In terms of biological role, the fumarate reductase enzyme complex is required for fumarate respiration. The polypeptide is Fumarate reductase flavoprotein subunit (frdA) (Helicobacter pylori (strain J99 / ATCC 700824) (Campylobacter pylori J99)).